The following is a 934-amino-acid chain: 2-oxoglutarate dehydrogenase E1 component (934 aa).

The protein belongs to the alpha-ketoglutarate dehydrogenase family. As to quaternary structure, homodimer. Part of the 2-oxoglutarate dehydrogenase (OGDH) complex composed of E1 (2-oxoglutarate dehydrogenase), E2 (dihydrolipoamide succinyltransferase) and E3 (dihydrolipoamide dehydrogenase); the complex contains multiple copies of the three enzymatic components (E1, E2 and E3). It depends on thiamine diphosphate as a cofactor.

It carries out the reaction N(6)-[(R)-lipoyl]-L-lysyl-[protein] + 2-oxoglutarate + H(+) = N(6)-[(R)-S(8)-succinyldihydrolipoyl]-L-lysyl-[protein] + CO2. In terms of biological role, E1 component of the 2-oxoglutarate dehydrogenase (OGDH) complex which catalyzes the decarboxylation of 2-oxoglutarate, the first step in the conversion of 2-oxoglutarate to succinyl-CoA and CO(2). This Coxiella burnetii (strain RSA 493 / Nine Mile phase I) protein is 2-oxoglutarate dehydrogenase E1 component (sucA).